The following is a 122-amino-acid chain: Large ribosomal subunit protein uL14 (122 aa).

It belongs to the universal ribosomal protein uL14 family. In terms of assembly, part of the 50S ribosomal subunit. Forms a cluster with proteins L3 and L19. In the 70S ribosome, L14 and L19 interact and together make contacts with the 16S rRNA in bridges B5 and B8.

Binds to 23S rRNA. Forms part of two intersubunit bridges in the 70S ribosome. This is Large ribosomal subunit protein uL14 from Paracidovorax citrulli (strain AAC00-1) (Acidovorax citrulli).